We begin with the raw amino-acid sequence, 409 residues long: Elongation factor Tu (409 aa).

In terms of domain architecture, tr-type G spans 10–214 (KPHVNIGTIG…EVDAYIPTPE (205 aa)). Positions 19–26 (GHVDHGKT) are G1. Residue 19–26 (GHVDHGKT) coordinates GTP. Thr26 is a Mg(2+) binding site. Residues 60 to 64 (GITIN) are G2. The G3 stretch occupies residues 81 to 84 (DCPG). GTP contacts are provided by residues 81–85 (DCPGH) and 136–139 (NKQD). Residues 136–139 (NKQD) form a G4 region. The tract at residues 174-176 (SAL) is G5.

It belongs to the TRAFAC class translation factor GTPase superfamily. Classic translation factor GTPase family. EF-Tu/EF-1A subfamily. In terms of assembly, monomer.

The protein resides in the cytoplasm. The catalysed reaction is GTP + H2O = GDP + phosphate + H(+). Its function is as follows. GTP hydrolase that promotes the GTP-dependent binding of aminoacyl-tRNA to the A-site of ribosomes during protein biosynthesis. The chain is Elongation factor Tu from Acaryochloris marina (strain MBIC 11017).